We begin with the raw amino-acid sequence, 57 residues long: Metallothionein-2 (57 aa).

The interval 1–28 (PDPCCNDKCDCKEGECKTGCKCTSCRCP) is beta. A divalent metal cation is bound by residues Cys-4, Cys-5, Cys-9, Cys-11, Cys-16, Cys-20, Cys-22, Cys-25, Cys-27, Cys-30, Cys-33, Cys-37, Cys-39, Cys-45, Cys-49, Cys-53, Cys-55, and Cys-56. The tract at residues 29–57 (PCEQCSSGCKCANKEDCRKTCSKPCSCCP) is alpha.

The protein belongs to the metallothionein superfamily. Type 3 family.

Its function is as follows. Metallothioneins have a high content of cysteine residues that bind various heavy metals. Class I MTS in marine crustacea are involved in the sequestration of elevated levels of heavy-metal ions. The chain is Metallothionein-2 from Scylla serrata (Mud crab).